The chain runs to 232 residues: Succinyl-CoA:3-ketoacid coenzyme A transferase subunit A (232 aa).

24 to 30 (GGFGLCG) lines the CoA pocket.

It belongs to the 3-oxoacid CoA-transferase subunit A family. Heterodimer of a subunit A and a subunit B.

The enzyme catalyses a 3-oxo acid + succinyl-CoA = a 3-oxoacyl-CoA + succinate. The protein is Succinyl-CoA:3-ketoacid coenzyme A transferase subunit A (scoA) of Helicobacter pylori (strain J99 / ATCC 700824) (Campylobacter pylori J99).